The sequence spans 37 residues: Esculentin-2B (37 aa).

Cys31 and Cys37 form a disulfide bridge.

Expressed by the skin glands.

It is found in the secreted. Antibacterial activity against Gram-positive bacterium S.aureus and Gram-negative bacterium E.coli. Has activity against C.albicans. This is Esculentin-2B from Lithobates berlandieri (Rio Grande leopard frog).